Here is a 419-residue protein sequence, read N- to C-terminus: Gamma-glutamyl phosphate reductase (419 aa).

It belongs to the gamma-glutamyl phosphate reductase family.

It is found in the cytoplasm. The enzyme catalyses L-glutamate 5-semialdehyde + phosphate + NADP(+) = L-glutamyl 5-phosphate + NADPH + H(+). It participates in amino-acid biosynthesis; L-proline biosynthesis; L-glutamate 5-semialdehyde from L-glutamate: step 2/2. Functionally, catalyzes the NADPH-dependent reduction of L-glutamate 5-phosphate into L-glutamate 5-semialdehyde and phosphate. The product spontaneously undergoes cyclization to form 1-pyrroline-5-carboxylate. The protein is Gamma-glutamyl phosphate reductase of Azobacteroides pseudotrichonymphae genomovar. CFP2.